Here is a 601-residue protein sequence, read N- to C-terminus: Elongation factor 4 (601 aa).

Residues Gln6 to Gln188 form the tr-type G domain. GTP is bound by residues Asp18 to Thr23 and Asn135 to Asp138.

It belongs to the TRAFAC class translation factor GTPase superfamily. Classic translation factor GTPase family. LepA subfamily.

Its subcellular location is the cell membrane. The enzyme catalyses GTP + H2O = GDP + phosphate + H(+). In terms of biological role, required for accurate and efficient protein synthesis under certain stress conditions. May act as a fidelity factor of the translation reaction, by catalyzing a one-codon backward translocation of tRNAs on improperly translocated ribosomes. Back-translocation proceeds from a post-translocation (POST) complex to a pre-translocation (PRE) complex, thus giving elongation factor G a second chance to translocate the tRNAs correctly. Binds to ribosomes in a GTP-dependent manner. This chain is Elongation factor 4, found in Desulfitobacterium hafniense (strain DSM 10664 / DCB-2).